The sequence spans 896 residues: Alanine--tRNA ligase (896 aa).

Positions 439 to 456 (QRAKDDAKAKKGQHRDAS) are enriched in basic and acidic residues. The tract at residues 439–459 (QRAKDDAKAKKGQHRDASAYR) is disordered. 4 residues coordinate Zn(2+): histidine 579, histidine 583, cysteine 681, and histidine 685.

It belongs to the class-II aminoacyl-tRNA synthetase family. It depends on Zn(2+) as a cofactor.

The protein localises to the cytoplasm. It carries out the reaction tRNA(Ala) + L-alanine + ATP = L-alanyl-tRNA(Ala) + AMP + diphosphate. Its function is as follows. Catalyzes the attachment of alanine to tRNA(Ala) in a two-step reaction: alanine is first activated by ATP to form Ala-AMP and then transferred to the acceptor end of tRNA(Ala). Also edits incorrectly charged Ser-tRNA(Ala) and Gly-tRNA(Ala) via its editing domain. This chain is Alanine--tRNA ligase, found in Nocardioides sp. (strain ATCC BAA-499 / JS614).